Reading from the N-terminus, the 75-residue chain is uncharacterized protein (75 aa).

A helical transmembrane segment spans residues 44-64; it reads IINMIVIWAALIALFVKLYIL.

Its subcellular location is the host membrane. This is an uncharacterized protein from Ostreid herpesvirus 1 (isolate France) (OsHV-1).